We begin with the raw amino-acid sequence, 153 residues long: CASP-like protein 5B1 (153 aa).

Over 1–20 the chain is Cytoplasmic; sequence MRELAGSPGTWSGLSLRVGQ. A helical membrane pass occupies residues 21-41; sequence LVFAAASVCATASALGFAAYT. Residue A42 is a topological domain, extracellular. The chain crosses the membrane as a helical span at residues 43-63; it reads FCYLIASMGLQALWSLGLACL. Over 64 to 76 the chain is Cytoplasmic; sequence DCYALKFKKDLHS. Residues 77 to 97 traverse the membrane as a helical segment; sequence AVLLSLFVVGDWVTAILSFAA. Residues 98–128 are Extracellular-facing; that stretch reads SCSAAGVVVLFDRDIYACRNPQLPCGRFELA. Residues 129 to 149 traverse the membrane as a helical segment; sequence IACAFLSWAFSATSALVMFWL. Over 150–153 the chain is Cytoplasmic; the sequence is LASL.

Belongs to the Casparian strip membrane proteins (CASP) family. Homodimer and heterodimers.

It is found in the cell membrane. This is CASP-like protein 5B1 from Oryza sativa subsp. indica (Rice).